A 4646-amino-acid polypeptide reads, in one-letter code: MSEPGGGGGEDGSAGLEVSAVQNVADVSVLQKHLRKLVPLLLEDGGEAPAALEAALEEKSALEQMRKFLSDPQVHTVLVERSTLKEDVGDEGEEEKEFISYNINIDIHYGVKSNSLAFIKRTPVIDADKPVSSQLRVLTLSEDSPYETLHSFISNAVAPFFKSYIRESGKADRDGDKMAPSVEKKIAELEMGLLHLQQNIEIPEISLPIHPMITNVAKQCYERGEKPKVTDFGDKVEDPTFLNQLQSGVNRWIREIQKVTKLDRDPASGTALQEISFWLNLERALYRIQEKRESPEVLLTLDILKHGKRFHATVSFDTDTGLKQALETVNDYNPLMKDFPLNDLLSATELDKIRQALVAIFTHLRKIRNTKYPIQRALRLVEAISRDLSSQLLKVLGTRKLMHVAYEEFEKVMVACFEVFQTWDDEYEKLQVLLRDIVKRKREENLKMVWRINPAHRKLQARLDQMRKFRRQHEQLRAVIVRVLRPQVTAVAQQNQGEVPEPQDMKVAEVLFDAADANAIEEVNLAYENVKEVDGLDVSKEGTEAWEAAMKRYDERIDRVETRITARLRDQLGTAKNANEMFRIFSRFNALFVRPHIRGAIREYQTQLIQRVKDDIESLHDKFKVQYPQSQACKMSHVRDLPPVSGSIIWAKQIDRQLTAYMKRVEDVLGKGWENHVEGQKLKQDGDSFRMKLNTQEIFDDWARKVQQRNLGVSGRIFTIESTRVRGRTGNVLKLKVNFLPEIITLSKEVRNLKWLGFRVPLAIVNKAHQANQLYPFAISLIESVRTYERTCEKVEERNTISLLVAGLKKEVQALIAEGIALVWESYKLDPYVQRLAETVFNFQEKVDDLLIIEEKIDLEVRSLETCMYDHKTFSEILNRVQKAVDDLNLHSYSNLPIWVNKLDMEIERILGVRLQAGLRAWTQVLLGQAEDKAEVDMDTDAPQVSHKPGGEPKIKNVVHELRITNQVIYLNPPIEECRYKLYQEMFAWKMVVLSLPRIQSQRYQVGVHYELTEEEKFYRNALTRMPDGPVALEESYSAVMGIVSEVEQYVKVWLQYQCLWDMQAENIYNRLGEDLNKWQALLVQIRKARGTFDNAETKKEFGPVVIDYGKVQSKVNLKYDSWHKEVLSKFGQMLGSNMTEFHSQISKSRQELEQHSVDTASTSDAVTFITYVQSLKRKIKQFEKQVELYRNGQRLLEKQRFQFPPSWLYIDNIEGEWGAFNDIMRRKDSAIQQQVANLQMKIVQEDRAVESRTTDLLTDWEKTKPVTGNLRPEEALQALTIYEGKFGRLKDDREKCAKAKEALELTDTGLLSGSEERVQVALEELQDLKGVWSELSKVWEQIDQMKEQPWVSVQPRKLRQNLDALLNQLKSFPARLRQYASYEFVQRLLKGYMKINMLVIELKSEALKDRHWKQLMKRLHVNWVVSELTLGQIWDVDLQKNEAIVKDVLLVAQGEMALEEFLKQIREVWNTYELDLVNYQNKCRLIRGWDDLFNKVKEHINSVSAMKLSPYYKVFEEDALSWEDKLNRIMALFDVWIDVQRRWVYLEGIFTGSADIKHLLPVETQRFQSISTEFLALMKKVSKSPLVMDVLNIQGVQRSLERLADLLGKIQKALGEYLERERSSFPRFYFVGDEDLLEIIGNSKNVAKLQKHFKKMFAGVSSIILNEDNSVVLGISSREGEEVMFKTPVSITEHPKINEWLTLVEKEMRVTLAKLLAESVTEVEIFGKATSIDPNTYITWIDKYQAQLVVLSAQIAWSENVETALSSMGGGGDAAPLHSVLSNVEVTLNVLADSVLMEQPPLRRRKLEHLITELVHQRDVTRSLIKSKIDNAKSFEWLSQMRFYFDPKQTDVLQQLSIQMANAKFNYGFEYLGVQDKLVQTPLTDRCYLTMTQALEARLGGSPFGPAGTGKTESVKALGHQLGRFVLVFNCDETFDFQAMGRIFVGLCQVGAWGCFDEFNRLEERMLSAVSQQVQCIQEALREHSNPNYDKTSAPITCELLNKQVKVSPDMAIFITMNPGYAGRSNLPDNLKKLFRSLAMTKPDRQLIAQVMLYSQGFRTAEVLANKIVPFFKLCDEQLSSQSHYDFGLRALKSVLVSAGNVKRERIQKIKREKEERGEAVDEGEIAENLPEQEILIQSVCETMVPKLVAEDIPLLFSLLSDVFPGVQYHRGEMTALREELKKVCQEMYLTYGDGEEVGGMWVEKVLQLYQITQINHGLMMVGPSGSGKSMAWRVLLKALERLEGVEGVAHIIDPKAISKDHLYGTLDPNTREWTDGLFTHVLRKIIDSVRGELQKRQWIVFDGDVDPEWVENLNSVLDDNKLLTLPNGERLSLPPNVRIMFEVQDLKYATLATVSRCGMVWFSEDVLSTDMIFNNFLARLRSIPLDEGEDEAQRRRKGKEDEGEEAASPMLQIQRDAATIMQPYFTSNGLVTKALEHAFQLEHIMDLTRLRCLGSLFSMLHQACRNVAQYNANHPDFPMQIEQLERYIQRYLVYAILWSLSGDSRLKMRAELGEYIRRITTVPLPTAPNIPIIDYEVSISGEWSPWQAKVPQIEVETHKVAAPDVVVPTLDTVRHEALLYTWLAEHKPLVLCGPPGSGKTMTLFSALRALPDMEVVGLNFSSATTPELLLKTFDHYCEYRRTPNGVVLAPVQLGKWLVLFCDEINLPDMDKYGTQRVISFIRQMVEHGGFYRTSDQTWVKLERIQFVGACNPPTDPGRKPLSHRFLRHVPVVYVDYPGPASLTQIYGTFNRAMLRLIPSLRTYAEPLTAAMVEFYTMSQERFTQDTQPHYIYSPREMTRWVRGIFEALRPLETLPVEGLIRIWAHEALRLFQDRLVEDEERRWTDENIDTVALKHFPNIDREKAMSRPILYSNWLSKDYIPVDQEELRDYVKARLKVFYEEELDVPLVLFNEVLDHVLRIDRIFRQPQGHLLLIGVSGAGKTTLSRFVAWMNGLSVYQIKVHRKYTGEDFDEDLRTVLRRSGCKNEKIAFIMDESNVLDSGFLERMNTLLANGEVPGLFEGDEYATLMTQCKEGAQKEGLMLDSHEELYKWFTSQVIRNLHVVFTMNPSSEGLKDRAATSPALFNRCVLNWFGDWSTEALYQVGKEFTSKMDLEKPNYIVPDYMPVVYDKLPQPPSHREAIVNSCVFVHQTLHQANARLAKRGGRTMAITPRHYLDFINHYANLFHEKRSELEEQQMHLNVGLRKIKETVDQVEELRRDLRIKSQELEVKNAAANDKLKKMVKDQQEAEKKKVMSQEIQEQLHKQQEVIADKQMSVKEDLDKVEPAVIEAQNAVKSIKKQHLVEVRSMANPPAAVKLALESICLLLGESTTDWKQIRSIIMRENFIPTIVNFSAEEISDAIREKMKKNYMSNPSYNYEIVNRASLACGPMVKWAIAQLNYADMLKRVEPLRNELQKLEDDAKDNQQKANEVEQMIRDLEASIARYKEEYAVLISEAQAIKADLAAVEAKVNRSTALLKSLSAERERWEKTSETFKNQMSTIAGDCLLSAAFIAYAGYFDQQMRQNLFTTWSHHLQQANIQFRTDIARTEYLSNADERLRWQASSLPADDLCTENAIMLKRFNRYPLIIDPSGQATEFIMNEYKDRKITRTSFLDDAFRKNLESALRFGNPLLVQDVESYDPVLNPVLNREVRRTGGRVLITLGDQDIDLSPSFVIFLSTRDPTVEFPPDLCSRVTFVNFTVTRSSLQSQCLNEVLKAERPDVDEKRSDLLKLQGEFQLRLRQLEKSLLQALNEVKGRILDDDTIITTLENLKREAAEVTRKVEETDIVMQEVETVSQQYLPLSTACSSIYFTMESLKQIHFLYQYSLQFFLDIYHNVLYENPNLKGVTDHTQRLSIITKDLFQVAFNRVARGMLHQDHITFAMLLARIKLKGTVGEPTYDAEFQHFLRGNEIVLSAGSTPRIQGLTVEQAEAVVRLSCLPAFKDLIAKVQADEQFGIWLDSSSPEQTVPYLWSEETPATPIGQAIHRLLLIQAFRPDRLLAMAHMFVSTNLGESFMSIMEQPLDLTHIVGTEVKPNTPVLMCSVPGYDASGHVEDLAAEQNTQITSIAIGSAEGFNQADKAINTAVKSGRWVMLKNVHLAPGWLMQLEKKLHSLQPHACFRLFLTMEINPKVPVNLLRAGRIFVFEPPPGVKANMLRTFSSIPVSRICKSPNERARLYFLLAWFHAIIQERLRYAPLGWSKKYEFGESDLRSACDTVDTWLDDTAKGRQNISPDKIPWSALKTLMAQSIYGGRVDNEFDQRLLNTFLERLFTTRSFDSEFKLACKVDGHKDIQMPDGIRREEFVQWVELLPDTQTPSWLGLPNNAERVLLTTQGVDMISKMLKMQMLEDEDDLAYAETEKKTRTDSTSDGRPAWMRTLHTTASNWLHLIPQTLSHLKRTVENIKDPLFRFFEREVKMGAKLLQDVRQDLADVVQVCEGKKKQTNYLRTLINELVKGILPRSWSHYTVPAGMTVIQWVSDFSERIKQLQNISLAAASGGAKELKNIHVCLGGLFVPEAYITATRQYVAQANSWSLEELCLEVNVTTSQGATLDACSFGVTGLKLQGATCNNNKLSLSNAISTALPLTQLRWVKQTNTEKKASVVTLPVYLNFTRADLIFTVDFEIATKEDPRSFYERGVAVLCTE.

Serine 2 carries the N-acetylserine modification. Residues 53–1867 (EAALEEKSAL…SIQMANAKFN (1815 aa)) form a stem region. Residue serine 70 is modified to Phosphoserine. 3 coiled-coil regions span residues 181 to 202 (SVEK…NIEI), 455 to 478 (AHRK…QLRA), and 543 to 566 (TEAW…RITA). Residues 448–703 (MVWRINPAHR…NTQEIFDDWA (256 aa)) form an interaction with DYNC1I2 region. The interaction with DYNC1LI2 stretch occupies residues 651–802 (AKQIDRQLTA…EKVEERNTIS (152 aa)). The residue at position 1125 (lysine 1125) is an N6-acetyllysine. Coiled coils occupy residues 1171-1252 (TYVQ…AVES) and 1357-1373 (RKLR…LKSF). At serine 1230 the chain carries Phosphoserine. AAA stretches follow at residues 1868 to 2099 (YGFE…VLVS), 2180 to 2452 (EELK…LTRL), 2556 to 2805 (EVET…WVRG), and 2899 to 3168 (VFYE…GGRT). ATP-binding positions include 1906–1913 (GPAGTGKT) and 2224–2231 (GPSGSGKS). A disordered region spans residues 2390 to 2411 (GEDEAQRRRKGKEDEGEEAASP). ATP contacts are provided by residues 2595-2602 (GPPGSGKT) and 2937-2944 (GVSGAGKT). Coiled coils occupy residues 3189–3275 (EKRS…ADKQ), 3396–3500 (AIAQ…KNQM), and 3737–3800 (EFQL…VSQQ). The interval 3189–3500 (EKRSELEEQQ…KTSETFKNQM (312 aa)) is stalk. N6-acetyllysine is present on lysine 3480. AAA regions lie at residues 3553-3782 (LSNA…EVTR) and 4005-4221 (AHMF…TVDT). Serine 4162 carries the phosphoserine modification. Position 4283 is an N6-acetyllysine (lysine 4283). Position 4366 is a phosphothreonine (threonine 4366). Serine 4368 carries the phosphoserine modification.

This sequence belongs to the dynein heavy chain family. As to quaternary structure, homodimer. The cytoplasmic dynein 1 complex consists of two catalytic heavy chains (HCs) and a number of non-catalytic subunits presented by intermediate chains (ICs), light intermediate chains (LICs) and light chains (LCs); the composition seems to vary in respect to the IC, LIC and LC composition. The heavy chain homodimer serves as a scaffold for the probable homodimeric assembly of the respective non-catalytic subunits. The ICs and LICs bind directly to the HC dimer and dynein LCs assemble on the IC dimer. Interacts with DYNC1LI1; DYNC1LI1 and DYNC1LI2 bind mutually exclusive to DYNC1H1. Interacts with DYNC1LI2; DYNC1LI1 and DYNC1LI2 bind mutually exclusive to DYNC1H1. Interacts with DYNC1I2. Interacts with BICD2. Interacts with isoform 2 of CRACR2A. Interacts with DNALI1.

The protein localises to the cytoplasm. Its subcellular location is the cytoskeleton. Its function is as follows. Cytoplasmic dynein 1 acts as a motor for the intracellular retrograde motility of vesicles and organelles along microtubules. Dynein has ATPase activity; the force-producing power stroke is thought to occur on release of ADP. Plays a role in mitotic spindle assembly and metaphase plate congression. The sequence is that of Cytoplasmic dynein 1 heavy chain 1 from Homo sapiens (Human).